A 316-amino-acid chain; its full sequence is MAKKTVGLLVMAYGTPYKEDDIERYYTHIRHGRKPPQEQIDDLKARYRAIGGLSPLAKITEAQAKQLEKRLNEMQDEVEFCMYLGLKHIEPFIEDAVERMHADGVKEAVAIVLAPHYSTFSICSYNERAKAAAEKLGGPVIYTIDQWYDEPKFLQYWSEKVKAIFDAMKEREREQAVLIVSAHSLPEKIIQAGDPYPAQLEDTAKRIAEQAGVTHYAVGWQSAGNTPEPWLGPDVQDLTRQLHDEQGYTSFVYAPVGFVADHLEVLYDNDIECKQVTEEIGARYYRPEMPNTDPLFIDALATVVLKRLAKEGDEHE.

Residues Tyr-13, Arg-30, 46 to 47 (RY), Ser-54, and Tyr-125 each bind Fe-coproporphyrin III. Residues His-183 and Glu-264 each contribute to the Fe(2+) site.

The protein belongs to the ferrochelatase family.

The protein localises to the cytoplasm. It catalyses the reaction Fe-coproporphyrin III + 2 H(+) = coproporphyrin III + Fe(2+). It participates in porphyrin-containing compound metabolism; protoheme biosynthesis. Its function is as follows. Involved in coproporphyrin-dependent heme b biosynthesis. Catalyzes the insertion of ferrous iron into coproporphyrin III to form Fe-coproporphyrin III. This chain is Coproporphyrin III ferrochelatase, found in Geobacillus thermodenitrificans (strain NG80-2).